Reading from the N-terminus, the 563-residue chain is Tripeptidyl-peptidase 1 (563 aa).

An N-terminal signal peptide occupies residues 1–19 (MGPRSGLLGLFALFVAGKC). A propeptide spans 20–195 (SYSPEPDQQR…PEPQVPGTVG (176 aa)) (removed in mature form). A disulfide bond links cysteine 111 and cysteine 122. The region spanning 199-563 (GVTPSVIRKR…PALLKTLMNP (365 aa)) is the Peptidase S53 domain. Asparagine 210 and asparagine 222 each carry an N-linked (GlcNAc...) asparagine glycan. Catalysis depends on charge relay system residues glutamate 272 and aspartate 276. N-linked (GlcNAc...) asparagine glycosylation is found at asparagine 286, asparagine 313, and asparagine 443. Intrachain disulfides connect cysteine 365/cysteine 526 and cysteine 522/cysteine 537. Serine 475 serves as the catalytic Charge relay system. Residues aspartate 517 and valine 518 each coordinate Ca(2+). Glycine 539, glycine 541, and aspartate 543 together coordinate Ca(2+).

In terms of assembly, monomer. Interacts with CLN5. Interacts with CLN3. Ca(2+) serves as cofactor. In terms of processing, activated by autocatalytic proteolytical processing upon acidification. N-glycosylation is required for processing and activity.

The protein localises to the lysosome. It is found in the melanosome. It catalyses the reaction Release of an N-terminal tripeptide from a polypeptide, but also has endopeptidase activity.. In terms of biological role, lysosomal serine protease with tripeptidyl-peptidase I activity. May act as a non-specific lysosomal peptidase which generates tripeptides from the breakdown products produced by lysosomal proteinases. Requires substrates with an unsubstituted N-terminus. In Bos taurus (Bovine), this protein is Tripeptidyl-peptidase 1 (TPP1).